A 370-amino-acid polypeptide reads, in one-letter code: MKLNTLQLENYRNYDEVTLKCHPDVNILIGENAQGKTNLLESIYTLALAKSHRTSNDKELIRFNADYAKIEGELSYRHGTMPLTMFITKKGKQVKVNHLEQSRLTQYIGHLNVVLFAPEDLNIVKGSPQIRRRFIDMELGQISAVYLNDLAQYQRILKQKNNYLKQLQLGQKKDLTMLEVLNQQFAEYAMKVTDKRAHFIQELESLAKPIHAGITNDKEALSLNYLPSLKFDYAQNEAARLEEIMSILSDNMQREKERGISLFGPHRDDISFDVNGMDAQTYGSQGQQRTTALSIKLAEIELMNIEVGEYPILLLDDVLSELDDSRQTHLLSTIQHKVQTFVTTTSVDGIDHEIMNNPKLYRINQGEIIK.

Residue glycine 30–threonine 37 coordinates ATP.

Belongs to the RecF family.

The protein resides in the cytoplasm. In terms of biological role, the RecF protein is involved in DNA metabolism; it is required for DNA replication and normal SOS inducibility. RecF binds preferentially to single-stranded, linear DNA. It also seems to bind ATP. The protein is DNA replication and repair protein RecF of Staphylococcus aureus (strain USA300).